A 513-amino-acid polypeptide reads, in one-letter code: Probable E3 ubiquitin-protein ligase XBOS34 (513 aa).

ANK repeat units lie at residues 39–69 (EGKT…NVNA), 75–104 (YCGT…NPFI), and 108–137 (DCHT…LFCG). Polar residues-rich tracts occupy residues 309 to 327 (ITTT…NSLN) and 335 to 355 (SAPS…STYN). Disordered stretches follow at residues 309-378 (ITTT…QNST) and 423-455 (SADG…SNSG). Low complexity predominate over residues 361–378 (GTSSGQSSSKHNKSQNST). Residues 436–446 (AENEGDAKPAE) are compositionally biased toward basic and acidic residues. An RING-type zinc finger spans residues 462–501 (CVICLDAPVEGACIPCGHMAGCMSCLKDIESKKWGCPICR).

The enzyme catalyses S-ubiquitinyl-[E2 ubiquitin-conjugating enzyme]-L-cysteine + [acceptor protein]-L-lysine = [E2 ubiquitin-conjugating enzyme]-L-cysteine + N(6)-ubiquitinyl-[acceptor protein]-L-lysine.. It participates in protein modification; protein ubiquitination. This Oryza sativa subsp. japonica (Rice) protein is Probable E3 ubiquitin-protein ligase XBOS34 (XBOS34).